A 297-amino-acid polypeptide reads, in one-letter code: Cbb3-type cytochrome c oxidase subunit CcoP (297 aa).

Topologically, residues 1–35 (MSKKPTTKKEVQTTGHSWDGIEELNTPLPRWWLWT) are cytoplasmic. Residues 36-56 (FYATIVWGVAYSIAMPAWPIF) form a helical membrane-spanning segment. Residues 57–297 (ASGATPGILG…SYVHSLGGGQ (241 aa)) lie on the Periplasmic side of the membrane. Cytochrome c domains lie at 108 to 199 (YTRN…LKIS) and 206 to 294 (ARAT…HSLG). Heme c contacts are provided by C121, C124, H125, M174, C219, C222, H223, and M264.

Belongs to the CcoP / FixP family. As to quaternary structure, component of the cbb3-type cytochrome c oxidase at least composed of CcoN, CcoO, CcoQ and CcoP. Interacts with CcoH (via transmembrane domain). It depends on heme c as a cofactor.

Its subcellular location is the cell inner membrane. Its pathway is energy metabolism; oxidative phosphorylation. Functionally, C-type cytochrome. Part of the cbb3-type cytochrome c oxidase complex. CcoP subunit is required for transferring electrons from donor cytochrome c via its heme groups to CcoO subunit. From there, electrons are shuttled to the catalytic binuclear center of CcoN subunit where oxygen reduction takes place. The complex also functions as a proton pump. This chain is Cbb3-type cytochrome c oxidase subunit CcoP, found in Rhodobacter capsulatus (strain ATCC BAA-309 / NBRC 16581 / SB1003).